Here is a 79-residue protein sequence, read N- to C-terminus: Small ribosomal subunit protein bS18B (79 aa).

Basic and acidic residues predominate over residues 1–11 (MPRPRKADRTP). The disordered stretch occupies residues 1–24 (MPRPRKADRTPARQRPNPLDRDGV).

This sequence belongs to the bacterial ribosomal protein bS18 family. Part of the 30S ribosomal subunit. Forms a tight heterodimer with protein bS6.

Functionally, binds as a heterodimer with protein bS6 to the central domain of the 16S rRNA, where it helps stabilize the platform of the 30S subunit. This is Small ribosomal subunit protein bS18B from Streptomyces coelicolor (strain ATCC BAA-471 / A3(2) / M145).